Reading from the N-terminus, the 468-residue chain is Adenylosuccinate synthetase (468 aa).

GTP is bound by residues 23–29 and 51–53; these read GDEGKGK and GHE. Aspartate 24 serves as the catalytic Proton acceptor. 2 residues coordinate Mg(2+): aspartate 24 and glycine 51. IMP-binding positions include 24–27, 49–52, threonine 142, arginine 156, asparagine 238, threonine 253, and arginine 317; these read DEGK and NSGH. Histidine 52 (proton donor) is an active-site residue. 313 to 319 provides a ligand contact to substrate; it reads VTTGRTR. Residues arginine 319 and 345-347 contribute to the GTP site; that span reads KLD.

Belongs to the adenylosuccinate synthetase family. In terms of assembly, homodimer. Mg(2+) serves as cofactor.

The protein resides in the cytoplasm. The catalysed reaction is IMP + L-aspartate + GTP = N(6)-(1,2-dicarboxyethyl)-AMP + GDP + phosphate + 2 H(+). Its pathway is purine metabolism; AMP biosynthesis via de novo pathway; AMP from IMP: step 1/2. Its function is as follows. Plays an important role in the salvage pathway for purine nucleotide biosynthesis. Catalyzes the first committed step in the biosynthesis of AMP from IMP. This Theileria annulata protein is Adenylosuccinate synthetase.